Consider the following 924-residue polypeptide: Periplasmic nitrate reductase (924 aa).

The segment at residues 1 to 30 (MNRRDFIKNTAIASAASVAGLSVPSSMLGA) is a signal peptide (tat-type signal). The 4Fe-4S Mo/W bis-MGD-type domain maps to 35-91 (WKWDKAVCRFCGTGCGIMIARKDGKIVATKGDPAAPVNRGLNCIKGYFNAKIMYGED). [4Fe-4S] cluster is bound by residues Cys-42, Cys-45, Cys-49, and Cys-77. Mo-bis(molybdopterin guanine dinucleotide) is bound by residues Lys-79, Gln-147, Asn-172, Cys-176, 209 to 216 (WGANMAEM), Met-417, Gln-421, Asn-527, 552 to 553 (SD), Lys-575, Asp-602, and 814 to 823 (TGRVLEHWHS). Trp-890 serves as a coordination point for substrate. The Mo-bis(molybdopterin guanine dinucleotide) site is built by Asn-898 and Lys-915.

This sequence belongs to the prokaryotic molybdopterin-containing oxidoreductase family. NasA/NapA/NarB subfamily. As to quaternary structure, component of the periplasmic nitrate reductase NapAB complex composed of NapA and NapB. [4Fe-4S] cluster serves as cofactor. Requires Mo-bis(molybdopterin guanine dinucleotide) as cofactor. In terms of processing, predicted to be exported by the Tat system. The position of the signal peptide cleavage has not been experimentally proven.

It localises to the periplasm. It catalyses the reaction 2 Fe(II)-[cytochrome] + nitrate + 2 H(+) = 2 Fe(III)-[cytochrome] + nitrite + H2O. Functionally, catalytic subunit of the periplasmic nitrate reductase complex NapAB. Receives electrons from NapB and catalyzes the reduction of nitrate to nitrite. The sequence is that of Periplasmic nitrate reductase from Campylobacter jejuni subsp. jejuni serotype O:6 (strain 81116 / NCTC 11828).